Here is a 181-residue protein sequence, read N- to C-terminus: Major urinary protein 20 (181 aa).

The first 19 residues, 1–19 (MKLLVLLLCLGLTLVCVHA), serve as a signal peptide directing secretion. Cys83 and Cys176 form a disulfide bridge.

It belongs to the calycin superfamily. Lipocalin family. Detected in urine of males but absent from female urine (at protein level).

Its subcellular location is the secreted. Male pheromone which stimulates female sexual attraction to male urinary scent and promotes a strong learned attraction to the airborne urinary odor of an individual male. Promotes spatial learning by rapidly conditioning preference for its remembered location among females and competitor males so that animals prefer to spend time in the site even when scent is absent. In addition to promoting a rapid attraction response, also elicits ultrasonic vocalizations and urinary scent marking in females which do not occur immediately after exposure. Stimulates hippocampal neurogenesis and cell proliferation in the subventricular zone in females. Promotes male aggressive behavior. Response to Mup20 is mediated by a neural circuit extending from the accessory olfactory bulb to a subset of nitric oxidase synthase-expressing neurons in the medial amygdala. As well as acting as a pheromone itself, binds most of the male pheromone, 2-sec-butyl-4,5-dihydrothiazole, in urine and is responsible for its slow release from scent marks. The chain is Major urinary protein 20 from Mus musculus (Mouse).